A 113-amino-acid polypeptide reads, in one-letter code: Large ribosomal subunit protein P2 (113 aa).

The interval 60–113 is disordered; it reads SKVSSLSAGAGPSGGAAAAGADAGAAEAEKEEEPQEEEADVNMGDIFGGDDEDY. The segment covering 74 to 85 has biased composition (low complexity); it reads GAAAAGADAGAA. Acidic residues predominate over residues 88–99; it reads EKEEEPQEEEAD.

This sequence belongs to the eukaryotic ribosomal protein P1/P2 family. As to quaternary structure, P1 and P2 exist as dimers at the large ribosomal subunit. Post-translationally, phosphorylated.

Functionally, plays an important role in the elongation step of protein synthesis. The protein is Large ribosomal subunit protein P2 of Euplotes raikovi.